We begin with the raw amino-acid sequence, 378 residues long: Carbamoyl phosphate synthase small chain (378 aa).

Residues 1-188 (MSILKEAYLY…THFAYGTSPN (188 aa)) form a CPSase region. Positions 49, 244, and 246 each coordinate L-glutamine. Residues 192 to 378 (KVVAIDFGAK…FEEFAKLCCK (187 aa)) form the Glutamine amidotransferase type-1 domain. Cysteine 272 functions as the Nucleophile in the catalytic mechanism. L-glutamine contacts are provided by leucine 273, glutamine 276, asparagine 314, and tyrosine 317. Residues histidine 355 and glutamate 357 contribute to the active site.

The protein belongs to the CarA family. Composed of two chains; the small (or glutamine) chain promotes the hydrolysis of glutamine to ammonia, which is used by the large (or ammonia) chain to synthesize carbamoyl phosphate. Tetramer of heterodimers (alpha,beta)4.

It catalyses the reaction hydrogencarbonate + L-glutamine + 2 ATP + H2O = carbamoyl phosphate + L-glutamate + 2 ADP + phosphate + 2 H(+). It carries out the reaction L-glutamine + H2O = L-glutamate + NH4(+). It functions in the pathway amino-acid biosynthesis; L-arginine biosynthesis; carbamoyl phosphate from bicarbonate: step 1/1. Its pathway is pyrimidine metabolism; UMP biosynthesis via de novo pathway; (S)-dihydroorotate from bicarbonate: step 1/3. Functionally, small subunit of the glutamine-dependent carbamoyl phosphate synthetase (CPSase). CPSase catalyzes the formation of carbamoyl phosphate from the ammonia moiety of glutamine, carbonate, and phosphate donated by ATP, constituting the first step of 2 biosynthetic pathways, one leading to arginine and/or urea and the other to pyrimidine nucleotides. The small subunit (glutamine amidotransferase) binds and cleaves glutamine to supply the large subunit with the substrate ammonia. The sequence is that of Carbamoyl phosphate synthase small chain from Helicobacter hepaticus (strain ATCC 51449 / 3B1).